The chain runs to 282 residues: Bifunctional protein FolD (282 aa).

NADP(+) contacts are provided by residues 164 to 166 and Ser189; that span reads GRS.

Belongs to the tetrahydrofolate dehydrogenase/cyclohydrolase family. In terms of assembly, homodimer.

It catalyses the reaction (6R)-5,10-methylene-5,6,7,8-tetrahydrofolate + NADP(+) = (6R)-5,10-methenyltetrahydrofolate + NADPH. It carries out the reaction (6R)-5,10-methenyltetrahydrofolate + H2O = (6R)-10-formyltetrahydrofolate + H(+). It participates in one-carbon metabolism; tetrahydrofolate interconversion. Functionally, catalyzes the oxidation of 5,10-methylenetetrahydrofolate to 5,10-methenyltetrahydrofolate and then the hydrolysis of 5,10-methenyltetrahydrofolate to 10-formyltetrahydrofolate. In Anaeromyxobacter dehalogenans (strain 2CP-C), this protein is Bifunctional protein FolD.